The primary structure comprises 124 residues: MGLPKTLRLKHWQDFQTVYQQGKRHRHSNLLMRVLGDRQADHSRFGITVSQKVSKKATVRNRLKRQIRAVINHFQPQIKPGFDVVIIVLPQGIGCNYERFLRELEQLFSQAGIIDHGHSRNHLL.

It belongs to the RnpA family. Consists of a catalytic RNA component (M1 or rnpB) and a protein subunit.

It catalyses the reaction Endonucleolytic cleavage of RNA, removing 5'-extranucleotides from tRNA precursor.. Its function is as follows. RNaseP catalyzes the removal of the 5'-leader sequence from pre-tRNA to produce the mature 5'-terminus. It can also cleave other RNA substrates such as 4.5S RNA. The protein component plays an auxiliary but essential role in vivo by binding to the 5'-leader sequence and broadening the substrate specificity of the ribozyme. This is Ribonuclease P protein component from Synechocystis sp. (strain ATCC 27184 / PCC 6803 / Kazusa).